A 503-amino-acid polypeptide reads, in one-letter code: U6 snRNA (guanine-N(2))-methyltransferase THUMPD2 (503 aa).

The 106-residue stretch at 161 to 266 (CQLEKQIKEE…DIYSVVGIPV (106 aa)) folds into the THUMP domain.

The protein belongs to the methyltransferase superfamily. As to quaternary structure, part of the heterodimeric THUMPD2-TRM112 methyltransferase complex; this complex forms an active tRNA methyltransferase, where TRMT112 acts as an activator of the catalytic subunit THUMPD2. Expressed in a variety of tissues including brain, colon, gingiva, heart, kidney, liver, lung, placenta, small intestine, spleen and thymus.

The protein localises to the nucleus. The enzyme catalyses guanosine in U6 snRNA + S-adenosyl-L-methionine = N(2)-methylguanosine in U6 snRNA + S-adenosyl-L-homocysteine + H(+). Catalytic subunit of the THUMPD2-TRM112 methyltransferase complex, that specifically mediates the S-adenosyl-L-methionine-dependent N(2)-methylation of guanosine nucleotides, most probably at position 72 (m2G72), in the U6snRNA of the major spliceosome. This modification in the U6 snRNA affects the constitutive splicing efficiency of introns that have suboptimal splice sites and can impact final mRNA levels. In Homo sapiens (Human), this protein is U6 snRNA (guanine-N(2))-methyltransferase THUMPD2.